The sequence spans 195 residues: UPF0314 protein RHE_CH03951 (195 aa).

A run of 4 helical transmembrane segments spans residues 14-34, 64-84, 128-148, and 150-170; these read AFWFVACLAVLVAQIIAEYLM, WYTPSHIIHGFLFYGLGYLIL, DSILNSAMDTVFMCLGFFFAA, and APVALTVVIAIFFEIFTGYVI.

It belongs to the UPF0314 family.

Its subcellular location is the cell membrane. The polypeptide is UPF0314 protein RHE_CH03951 (Rhizobium etli (strain ATCC 51251 / DSM 11541 / JCM 21823 / NBRC 15573 / CFN 42)).